The chain runs to 23 residues: Caerin-4.2 (23 aa).

As to expression, expressed by the skin parotoid and/or rostral glands.

The protein localises to the secreted. Antibacterial peptide, that adopts an alpha helical conformation which can disrupt bacterial membranes. Each caerin displays a different antimicrobial specificity. The sequence is that of Caerin-4.2 from Ranoidea caerulea (Green tree frog).